We begin with the raw amino-acid sequence, 188 residues long: dCTP deaminase (188 aa).

Residue 109–114 coordinates dCTP; it reads KSTYAR. Glu-135 serves as the catalytic Proton donor/acceptor. Positions 154, 168, and 178 each coordinate dCTP.

This sequence belongs to the dCTP deaminase family. In terms of assembly, homotrimer.

The enzyme catalyses dCTP + H2O + H(+) = dUTP + NH4(+). The protein operates within pyrimidine metabolism; dUMP biosynthesis; dUMP from dCTP (dUTP route): step 1/2. Its function is as follows. Catalyzes the deamination of dCTP to dUTP. This Helicobacter hepaticus (strain ATCC 51449 / 3B1) protein is dCTP deaminase.